We begin with the raw amino-acid sequence, 100 residues long: Integration host factor subunit alpha (100 aa).

Residues 53 to 73 (FDLRDKRQRPGRNPKTGEEIP) are disordered.

This sequence belongs to the bacterial histone-like protein family. Heterodimer of an alpha and a beta chain.

Functionally, this protein is one of the two subunits of integration host factor, a specific DNA-binding protein that functions in genetic recombination as well as in transcriptional and translational control. This is Integration host factor subunit alpha from Pseudomonas aeruginosa (strain LESB58).